The following is a 37-amino-acid chain: Large ribosomal subunit protein bL36 (37 aa).

It belongs to the bacterial ribosomal protein bL36 family.

The chain is Large ribosomal subunit protein bL36 from Syntrophomonas wolfei subsp. wolfei (strain DSM 2245B / Goettingen).